We begin with the raw amino-acid sequence, 249 residues long: DNA repair protein RecO (249 aa).

Belongs to the RecO family.

Its function is as follows. Involved in DNA repair and RecF pathway recombination. The chain is DNA repair protein RecO from Desulforudis audaxviator (strain MP104C).